The following is a 402-amino-acid chain: Thyroid hormone receptor alpha (402 aa).

The disordered stretch occupies residues methionine 1–glycine 22. The modulating stretch occupies residues methionine 1–glutamine 50. Position 12 is a phosphoserine; by CK2 (serine 12). A Phosphoserine modification is found at serine 28. Residues cysteine 51, cysteine 54, cysteine 68, cysteine 71, cysteine 89, cysteine 95, cysteine 105, and cysteine 108 each contribute to the Zn(2+) site. 2 consecutive NR C4-type zinc fingers follow at residues cysteine 51 to cysteine 71 and cysteine 89 to cysteine 113. The segment at residues cysteine 51–tyrosine 125 is a DNA-binding region (nuclear receptor). Residues glutamate 161–valine 402 form the NR LBD domain. 3,3',5-triiodo-L-thyronine contacts are provided by arginine 226 and serine 275.

The protein belongs to the nuclear hormone receptor family. NR1 subfamily. In terms of assembly, probably interacts with SFPQ.

The protein localises to the nucleus. Functionally, nuclear hormone receptor that can act as a repressor or activator of transcription. High affinity receptor for thyroid hormones, including triiodothyronine and thyroxine. This is Thyroid hormone receptor alpha (THRA) from Pygoscelis adeliae (Adelie penguin).